The following is a 459-amino-acid chain: VGFKAGVKDYKLTYYTPDYETKDTDILAAFRVTPQPGVPPEEAGAAVAAESSTGTWTTVWTDGLTSLDRYKGRCYHIESVAGEENQYIAYVAYPLDLFEEGSVTNMFTSIVGNVFGFKALRALRLEDLRIPPAYCKTFQGPPHGIQVERDKLNKYGRPLLGCTIKPKLGLSAKNYGRAVYECLRGGLDFTKDDENVNSQPFMRWRDRFLFCAEAIYKAQDETGEIKGHYLNATAGTCEEMIKRAVFARELGVPIIMHDYLTGGFTANTSLAHYCRDNGLLLHIHRAMHAVIDRQKNHGIHFRVLAKALRMSGGDHIHSGTVVGKLEGERDITLGFVDLLRDDYIEKDRARGIYFSQDWVSLPGVLPVASGGIHVWHMPALTEIFGDDSVLQFGGGTLGHPWGNAPGAVANRVALEACVQARNEGRDLAREGNEIIRRAGKWSPELAAACEVWKEIKFEF.

K4 is subject to N6,N6,N6-trimethyllysine. Substrate is bound by residues N113 and T163. The Proton acceptor role is filled by K165. Residue K167 coordinates substrate. Mg(2+)-binding residues include K191, D193, and E194. K191 carries the post-translational modification N6-carboxylysine. Catalysis depends on H284, which acts as the Proton acceptor. Substrate contacts are provided by R285, H317, and S369.

It belongs to the RuBisCO large chain family. Type I subfamily. In terms of assembly, heterohexadecamer of 8 large chains and 8 small chains; disulfide-linked. The disulfide link is formed within the large subunit homodimers. Requires Mg(2+) as cofactor. Post-translationally, the disulfide bond which can form in the large chain dimeric partners within the hexadecamer appears to be associated with oxidative stress and protein turnover.

Its subcellular location is the plastid. The protein localises to the chloroplast. The catalysed reaction is 2 (2R)-3-phosphoglycerate + 2 H(+) = D-ribulose 1,5-bisphosphate + CO2 + H2O. It catalyses the reaction D-ribulose 1,5-bisphosphate + O2 = 2-phosphoglycolate + (2R)-3-phosphoglycerate + 2 H(+). Functionally, ruBisCO catalyzes two reactions: the carboxylation of D-ribulose 1,5-bisphosphate, the primary event in carbon dioxide fixation, as well as the oxidative fragmentation of the pentose substrate in the photorespiration process. Both reactions occur simultaneously and in competition at the same active site. The protein is Ribulose bisphosphate carboxylase large chain of Roridula gorgonias (South African fly bush).